The following is a 976-amino-acid chain: Vacuolar membrane protease (976 aa).

The Cytoplasmic portion of the chain corresponds to 1 to 15 (MKLKSVFRSVLKYRK). A helical membrane pass occupies residues 16-36 (TNLSLLLLITYSIITLLYIFD). The Vacuolar portion of the chain corresponds to 37-359 (HERYKLNLPK…KFFVISAKTL (323 aa)). N-linked (GlcNAc...) asparagine glycosylation is found at N96 and N121. Zn(2+) is bound by residues H156 and D168. N-linked (GlcNAc...) asparagine glycosylation is present at N189. Residue E200 is the Proton acceptor of the active site. E201 provides a ligand contact to Zn(2+). N212 and N217 each carry an N-linked (GlcNAc...) asparagine glycan. Zn(2+) contacts are provided by E226 and H300. The helical transmembrane segment at 360–380 (FYWNCIFLLVSPVVAIGLYLI) threads the bilayer. Residues 381–392 (SRDRMTWKSHSW) are Cytoplasmic-facing. Residues 393–412 (LSWTRFPLSLAAGIIVQKLF) form a helical membrane-spanning segment. Topologically, residues 413 to 428 (SNDIIRSNPLTFSRNY) are vacuolar. Residues 429–449 (FWPISAFFTQVIFTSYVLINC) traverse the membrane as a helical segment. Residues 450 to 461 (SNFFFPCADMKS) are Cytoplasmic-facing. Residues 462 to 482 (LSIIELFIILWTILLFTSKLL) traverse the membrane as a helical segment. Over 483–496 (YSSDYRYTGLYPLS) the chain is Vacuolar. The chain crosses the membrane as a helical span at residues 497–517 (IFFLLSTIAAILRLLALALGM). The Cytoplasmic portion of the chain corresponds to 518–627 (RTRKRLGREC…NSLKLEYTDY (110 aa)). Residues 528-610 (RDHHSNYSSH…PLLKGSNSME (83 aa)) form a disordered region. Polar residues predominate over residues 549–558 (NLEQPQDQFT). Low complexity predominate over residues 559–570 (SSQDDQASIQDD). The segment covering 582–601 (NVDEDHGMDSSSQQHDERVP) has biased composition (basic and acidic residues). A helical transmembrane segment spans residues 628–648 (AWIIQFLLIVPIPSFILFNSV). Residues 649–668 (DVIMDALNHTVQEGSKATFD) are Vacuolar-facing. N656 carries an N-linked (GlcNAc...) asparagine glycan. Residues 669–689 (VLRFGMVGSILMALPILPFFY) traverse the membrane as a helical segment. Residues 690 to 692 (KVN) are Cytoplasmic-facing. A helical membrane pass occupies residues 693 to 713 (YITISLTALLFLISASKTLLV). The Vacuolar portion of the chain corresponds to 714–976 (HPFTNSNPLK…LVIVKDAIIL (263 aa)). N-linked (GlcNAc...) asparagine glycans are attached at residues N768, N796, N811, N866, and N937.

The protein belongs to the peptidase M28 family. Requires Zn(2+) as cofactor.

The protein resides in the vacuole membrane. May be involved in vacuolar sorting and osmoregulation. This chain is Vacuolar membrane protease, found in Saccharomyces cerevisiae (strain Lalvin EC1118 / Prise de mousse) (Baker's yeast).